The primary structure comprises 976 residues: Leucine--tRNA ligase (976 aa).

The 'HIGH' region signature appears at 63 to 74 (PYPSGVGLHVGH). Positions 745-749 (KMGKS) match the 'KMSKS' region motif. Lys-748 lines the ATP pocket.

This sequence belongs to the class-I aminoacyl-tRNA synthetase family.

The protein localises to the cytoplasm. The catalysed reaction is tRNA(Leu) + L-leucine + ATP = L-leucyl-tRNA(Leu) + AMP + diphosphate. In Corynebacterium jeikeium (strain K411), this protein is Leucine--tRNA ligase.